The chain runs to 391 residues: Isochorismate synthase EntC (391 aa).

Residues T140, T142, V145, and D146 each contribute to the Mg(2+) site. The active-site Proton acceptor is the K147. E197 functions as the Proton donor in the catalytic mechanism. Residues G214, S215, E241, A303, R347, and G361 each coordinate isochorismate. Position 241 (E241) interacts with Mg(2+). A Mg(2+)-binding site is contributed by E376. K380 is an isochorismate binding site.

This sequence belongs to the isochorismate synthase family. As to quaternary structure, monomer. Forms a specific pairwise interaction with EntB; this interaction likely facilitates substrate channeling to connect the EntB and EntC active sites. Mg(2+) is required as a cofactor.

The catalysed reaction is chorismate = isochorismate. Its pathway is siderophore biosynthesis; enterobactin biosynthesis. Functionally, involved in the biosynthesis of the siderophore enterobactin (macrocyclic trimeric lactone of N-(2,3-dihydroxybenzoyl)-serine). Catalyzes the reversible conversion of chorismate to isochorismate. In Escherichia coli O157:H7, this protein is Isochorismate synthase EntC.